Consider the following 230-residue polypeptide: 3,4-dihydroxy-2-butanone 4-phosphate synthase (230 aa).

Residues 42–43, Asp-47, 155–159, and Glu-179 each bind D-ribulose 5-phosphate; these read RE and RRGHT. A Mg(2+)-binding site is contributed by Glu-43. Residue His-158 participates in Mg(2+) binding.

Belongs to the DHBP synthase family. Homodimer. Mg(2+) is required as a cofactor. The cofactor is Mn(2+).

It catalyses the reaction D-ribulose 5-phosphate = (2S)-2-hydroxy-3-oxobutyl phosphate + formate + H(+). The protein operates within cofactor biosynthesis; riboflavin biosynthesis; 2-hydroxy-3-oxobutyl phosphate from D-ribulose 5-phosphate: step 1/1. Functionally, catalyzes the conversion of D-ribulose 5-phosphate to formate and 3,4-dihydroxy-2-butanone 4-phosphate. The polypeptide is 3,4-dihydroxy-2-butanone 4-phosphate synthase (Bordetella pertussis (strain Tohama I / ATCC BAA-589 / NCTC 13251)).